Here is a 170-residue protein sequence, read N- to C-terminus: Cyclic pyranopterin monophosphate synthase (170 aa).

The tract at residues 1-25 (MADPSTLTHPDPEGGVRMMDASQKS) is disordered. Substrate-binding positions include 78 to 80 (LCH) and 116 to 117 (ME). The active site involves D131.

The protein belongs to the MoaC family. As to quaternary structure, homohexamer; trimer of dimers.

It catalyses the reaction (8S)-3',8-cyclo-7,8-dihydroguanosine 5'-triphosphate = cyclic pyranopterin phosphate + diphosphate. Its pathway is cofactor biosynthesis; molybdopterin biosynthesis. In terms of biological role, catalyzes the conversion of (8S)-3',8-cyclo-7,8-dihydroguanosine 5'-triphosphate to cyclic pyranopterin monophosphate (cPMP). The protein is Cyclic pyranopterin monophosphate synthase of Salinibacter ruber (strain DSM 13855 / M31).